The chain runs to 159 residues: Ribosome maturation factor RimP (159 aa).

This sequence belongs to the RimP family.

Its subcellular location is the cytoplasm. Functionally, required for maturation of 30S ribosomal subunits. The chain is Ribosome maturation factor RimP from Geotalea uraniireducens (strain Rf4) (Geobacter uraniireducens).